The chain runs to 358 residues: Bis(monoacylglycero)phosphate synthase CLN5 (358 aa).

The tract at residues 1 to 23 (MAQVGSAGPGACGRRGAGAGAGP) is disordered. Residues 1 to 29 (MAQVGSAGPGACGRRGAGAGAGPERTTWR) lie on the Cytoplasmic side of the membrane. Residues 7–21 (AGPGACGRRGAGAGA) show a composition bias toward gly residues. The helical; Signal-anchor for type II membrane protein transmembrane segment at 30 to 46 (WAPALLWLATAAAVAGD) threads the bilayer. The Lumenal segment spans residues 47–358 (PSRRQWPVPY…NRKNRTLSGL (312 aa)). Disulfide bonds link Cys-69-Cys-158 and Cys-76-Cys-164. Residue His-116 is the Proton acceptor of the active site. Asn-129, Asn-142, Asn-177, and Asn-202 each carry an N-linked (GlcNAc...) asparagine glycan. Residue Cys-230 is the Nucleophile; Acyl-thioester intermediate of the active site. N-linked (GlcNAc...) asparagine glycans are attached at residues Asn-254, Asn-270, and Asn-280. A membrane-anchoring region spans residues 303–342 (FLLSLLQIFDAVVIHREFYLFYNFEYWFLPMKYPFIKITY). An N-linked (GlcNAc...) asparagine glycan is attached at Asn-352.

Belongs to the CLN5 family. In terms of assembly, multimer. Interacts with SORT1, RAB5A and RAB7A. Interacts with PPT1, TPP1, CLN3, CLN6, CLN8, ATP5F1A and ATP5F1B. In terms of processing, N-glycosylated with both high mannose and complex type sugars. Glycosylation is important for proper folding and trafficking to the lysosomes. The type II membrane signal anchor is proteolytically cleaved to produce a mature form that is transported to the lysosomes (Bis(monoacylglycero)phosphate synthase CLN5, secreted form). Post-translationally, can undergo proteolytic cleavage at the C-terminus, probably by a cysteine protease and may involve the removal of approximately 10-15 residues from the C-terminal end.

The protein localises to the lysosome. It localises to the membrane. It catalyses the reaction S-hexadecanoyl-L-cysteinyl-[protein] + H2O = L-cysteinyl-[protein] + hexadecanoate + H(+). The enzyme catalyses 2 1-acyl-sn-glycero-3-phospho-(1'-sn-glycerol) = 1-acyl-sn-glycero-3-phospho-(3'-acyl-sn-1'-glycerol) + sn-glycero-3-phospho-(1'-sn-glycerol). It carries out the reaction 2 1-(9Z-octadecenoyl)-sn-glycero-3-phospho-(1'-sn-glycerol) = 1-(9Z-octadecenoyl)-sn-glycero-3-phospho-(3'-(9Z-octadecenoyl)-1'-sn-glycerol) + sn-glycero-3-phospho-(1'-sn-glycerol). The catalysed reaction is 2 1-octadecanoyl-sn-glycero-3-phospho-(1'-sn-glycerol) = 1-octadecanoyl-sn-glycero-3-phospho-(3'-octadecanoyl-1'-sn-glycerol) + sn-glycero-3-phospho-(1'-sn-glycerol). It catalyses the reaction 2 1-hexadecanoyl-sn-glycero-3-phospho-(1'-sn-glycerol) = 1-hexadecanoyl-sn-glycero-3-phospho-(3'-hexadecanoyl-1'-sn-glycerol) + sn-glycero-3-phospho-(1'-sn-glycerol). The enzyme catalyses 2 1-tetradecanoyl-sn-glycero-3-phospho-(1'-sn-glycerol) = 1-tetradecanoyl-sn-glycero-3-phospho-(3'-tetradecanoyl-1'-sn-glycerol) + sn-glycero-3-phospho-(1'-sn-glycerol). In terms of biological role, catalyzes the synthesis of bis(monoacylglycero)phosphate (BMP) via transacylation of 2 molecules of lysophosphatidylglycerol (LPG). BMP also known as lysobisphosphatidic acid plays a key role in the formation of intraluminal vesicles and in maintaining intracellular cholesterol homeostasis. Can use only LPG as the exclusive lysophospholipid acyl donor for base exchange and displays BMP synthase activity towards various LPGs (LPG 14:0, LPG 16:0, LPG 18:0, LPG 18:1) with a higher preference for longer chain lengths. Plays a role in influencing the retrograde trafficking of lysosomal sorting receptors SORT1 and IGF2R from the endosomes to the trans-Golgi network by controlling the recruitment of retromer complex to the endosomal membrane. Regulates the localization and activation of RAB7A which is required to recruit the retromer complex to the endosomal membrane. Functionally, exhibits palmitoyl protein thioesterase (S-depalmitoylation) activity in vitro and most likely plays a role in protein S-depalmitoylation. The sequence is that of Bis(monoacylglycero)phosphate synthase CLN5 (CLN5) from Bos taurus (Bovine).